The chain runs to 1131 residues: Probable secreted beta-glucosidase adg3 (1131 aa).

An N-terminal signal peptide occupies residues 1–23; it reads MPSKIEKICLLLLGFTAASNVNA. 7 N-linked (GlcNAc...) asparagine glycosylation sites follow: N58, N123, N252, N551, N593, N631, and N689. The segment at 609–819 is disordered; the sequence is GTTSSTSEIV…SSPISSNSVT (211 aa). Over residues 623 to 715 the composition is skewed to low complexity; that stretch reads SNSNTGSLNG…YSDPTTTITS (93 aa). Positions 716 to 725 are enriched in polar residues; the sequence is EVSSILSSPT. A compositionally biased stretch (low complexity) spans 726–737; the sequence is SMQSSVSRPQSS. Polar residues predominate over residues 738-763; it reads GDASGFNTIFTSISQSSDGETSGYTI. Low complexity-rich tracts occupy residues 764–773 and 780–819; these read SSNSSQNSAS and TSSS…NSVT. N766, N806, and N857 each carry an N-linked (GlcNAc...) asparagine glycan. Positions 893 to 909 are enriched in low complexity; that stretch reads STSNSGSTSYSIPSSSS. Residues 893 to 918 are disordered; that stretch reads STSNSGSTSYSIPSSSSRNEGTTSYS. N920 carries an N-linked (GlcNAc...) asparagine glycan. The span at 977-1027 shows a compositional bias: low complexity; sequence LTVKPESSLSSSTTSGLTSSSSTIPSSTRSESNSESASTSSASKRSSSSTS. Residues 977–1031 are disordered; sequence LTVKPESSLSSSTTSGLTSSSSTIPSSTRSESNSESASTSSASKRSSSSTSLVQS.

It belongs to the SUN family.

Its subcellular location is the secreted. In terms of biological role, cell surface beta-glucosidase involved in cell wall biogenesis,. The protein is Probable secreted beta-glucosidase adg3 (adg3) of Schizosaccharomyces pombe (strain 972 / ATCC 24843) (Fission yeast).